We begin with the raw amino-acid sequence, 36 residues long: Amanexitide proprotein 2 (36 aa).

Positions 1-10 are excised as a propeptide; the sequence is MSDINATRLP. Residues 11 to 19 constitute a cross-link (cyclopeptide (Val-Pro)); the sequence is VFSLPVFFP. A propeptide spanning residues 20 to 36 is cleaved from the precursor; sequence FVSDDIQAVLTRGESLC.

It belongs to the MSDIN fungal toxin family. In terms of processing, processed by the macrocyclase-peptidase enzyme POPB to yield a toxic cyclic nonapeptide. POPB first removes 10 residues from the N-terminus. Conformational trapping of the remaining peptide forces the enzyme to release this intermediate rather than proceed to macrocyclization. The enzyme rebinds the remaining peptide in a different conformation and catalyzes macrocyclization of the N-terminal 9 residues. In terms of tissue distribution, expressed in basidiocarps.

In terms of biological role, cyclic nonapeptide that belongs to the MSDIN-like toxin family responsible for a large number of food poisoning cases and deaths. This Amanita exitialis (Guangzhou destroying angel) protein is Amanexitide proprotein 2.